Here is a 231-residue protein sequence, read N- to C-terminus: 5'-methylthioadenosine/S-adenosylhomocysteine nucleosidase (231 aa).

E12 (proton acceptor) is an active-site residue. Substrate-binding positions include G78, V153, and 174–175 (ME). D198 (proton donor) is an active-site residue.

This sequence belongs to the PNP/UDP phosphorylase family. MtnN subfamily.

It carries out the reaction S-adenosyl-L-homocysteine + H2O = S-(5-deoxy-D-ribos-5-yl)-L-homocysteine + adenine. The catalysed reaction is S-methyl-5'-thioadenosine + H2O = 5-(methylsulfanyl)-D-ribose + adenine. It catalyses the reaction 5'-deoxyadenosine + H2O = 5-deoxy-D-ribose + adenine. It functions in the pathway amino-acid biosynthesis; L-methionine biosynthesis via salvage pathway; S-methyl-5-thio-alpha-D-ribose 1-phosphate from S-methyl-5'-thioadenosine (hydrolase route): step 1/2. In terms of biological role, catalyzes the irreversible cleavage of the glycosidic bond in both 5'-methylthioadenosine (MTA) and S-adenosylhomocysteine (SAH/AdoHcy) to adenine and the corresponding thioribose, 5'-methylthioribose and S-ribosylhomocysteine, respectively. Also cleaves 5'-deoxyadenosine, a toxic by-product of radical S-adenosylmethionine (SAM) enzymes, into 5-deoxyribose and adenine. The protein is 5'-methylthioadenosine/S-adenosylhomocysteine nucleosidase of Aliivibrio fischeri (strain MJ11) (Vibrio fischeri).